Reading from the N-terminus, the 372-residue chain is Citrate/2-methylcitrate synthase (372 aa).

H188 contacts substrate. H223 is a catalytic residue. 256-260 (KIMGF) is a CoA binding site. H262 is an active-site residue. Substrate is bound at residue R272. Residue D314 is part of the active site. Substrate-binding residues include R339 and R358.

Belongs to the citrate synthase family.

It carries out the reaction propanoyl-CoA + oxaloacetate + H2O = 2-methylcitrate + CoA + H(+). The enzyme catalyses oxaloacetate + acetyl-CoA + H2O = citrate + CoA + H(+). The protein operates within carbohydrate metabolism; tricarboxylic acid cycle; isocitrate from oxaloacetate: step 1/2. Its function is as follows. Involved in both the tricarboxylic acid (TCA) and methylcitric acid cycles. Has both 2-methylcitrate synthase and citrate synthase activities. Catalyzes the condensation of propionyl-CoA and oxaloacetate to yield 2-methylcitrate (2-MC) and CoA, and the condensation of acetyl-CoA and oxaloacetate to yield citrate and CoA. Has 2.3-fold higher activity as a 2-methylcitrate synthase. Catalyzes the formation of either (2S,3R)- or (2R,3S)-2-methylcitrate. This is Citrate/2-methylcitrate synthase from Bacillus subtilis (strain 168).